A 123-amino-acid polypeptide reads, in one-letter code: Small ribosomal subunit protein uS13 (123 aa).

The disordered stretch occupies residues 94–123 (AGLPVRGQRTKTNARTRKGPKKTVGVQRKK). Positions 101-123 (QRTKTNARTRKGPKKTVGVQRKK) are enriched in basic residues.

Belongs to the universal ribosomal protein uS13 family. As to quaternary structure, part of the 30S ribosomal subunit. Forms a loose heterodimer with protein S19. Forms two bridges to the 50S subunit in the 70S ribosome.

In terms of biological role, located at the top of the head of the 30S subunit, it contacts several helices of the 16S rRNA. In the 70S ribosome it contacts the 23S rRNA (bridge B1a) and protein L5 of the 50S subunit (bridge B1b), connecting the 2 subunits; these bridges are implicated in subunit movement. Contacts the tRNAs in the A and P-sites. In Acetivibrio thermocellus (strain ATCC 27405 / DSM 1237 / JCM 9322 / NBRC 103400 / NCIMB 10682 / NRRL B-4536 / VPI 7372) (Clostridium thermocellum), this protein is Small ribosomal subunit protein uS13.